A 298-amino-acid chain; its full sequence is MLKIGSHVSMSGKKMLLAASEEAVSYGATTFMIYTGAPQNTRRKPIEELNIEAGRKHMELNGIEEIIVHAPYIINLGNTTKPETFQLGVDFLRMEIERTSALGVAKQIVLHPGAHVGAGADAGIQQIIKGLNEVLTPEQTVNIALETMAGKGTECGRSFEEIAKIIDGVKYNEKLSVCFDTCHTHDAGYDLVNDFDGVLNEFDKIVGINRLQVLHINDSKNVRGAGKDRHENIGFGHIGYKALHHIVHHPQLTHVPKILETPYVGEDKKDKKPPYKLEIEMLKNGTFDEGILEKIKAQ.

Positions 69, 111, 146, 180, 183, 215, 228, 230, and 260 each coordinate Zn(2+).

It belongs to the AP endonuclease 2 family. Requires Zn(2+) as cofactor.

The catalysed reaction is Endonucleolytic cleavage to 5'-phosphooligonucleotide end-products.. Its function is as follows. Endonuclease IV plays a role in DNA repair. It cleaves phosphodiester bonds at apurinic or apyrimidinic (AP) sites, generating a 3'-hydroxyl group and a 5'-terminal sugar phosphate. In Bacillus mycoides (strain KBAB4) (Bacillus weihenstephanensis), this protein is Probable endonuclease 4.